The primary structure comprises 196 residues: Large ribosomal subunit protein eL15 (196 aa).

Positions 162 to 196 (RGLTNAGRSNRGLQNRGKGAEHTRPSAGSGSRRGK) are disordered.

The protein belongs to the eukaryotic ribosomal protein eL15 family.

The sequence is that of Large ribosomal subunit protein eL15 from Haloquadratum walsbyi (strain DSM 16790 / HBSQ001).